The sequence spans 231 residues: Regulatory protein VanRc (231 aa).

Residues 4–117 form the Response regulatory domain; the sequence is KIVVVDDEKE…EVVARVKTQL (114 aa). Asp53 is subject to 4-aspartylphosphate. Positions 132-231 form a DNA-binding region, ompR/PhoB-type; sequence VEEYEKDGLI…VWGVGYIIEK (100 aa).

Post-translationally, phosphorylated by VanSc.

Its subcellular location is the cytoplasm. Functionally, member of the two-component regulatory system VanSc/VanRc. Binds to the promoter regions of target genes. Activates the transcription of vanC1 and vanXYC in response to vancomycin which results in vancomycin resistance. The polypeptide is Regulatory protein VanRc (Enterococcus gallinarum).